A 206-amino-acid polypeptide reads, in one-letter code: Small ribosomal subunit protein uS4 (206 aa).

Positions 96–159 (TRLDNVVYRM…KKQARISASL (64 aa)) constitute an S4 RNA-binding domain.

Belongs to the universal ribosomal protein uS4 family. Part of the 30S ribosomal subunit. Contacts protein S5. The interaction surface between S4 and S5 is involved in control of translational fidelity.

Functionally, one of the primary rRNA binding proteins, it binds directly to 16S rRNA where it nucleates assembly of the body of the 30S subunit. With S5 and S12 plays an important role in translational accuracy. The sequence is that of Small ribosomal subunit protein uS4 from Shewanella violacea.